The chain runs to 157 residues: Siroheme decarboxylase NirG subunit (157 aa).

Belongs to the Ahb/Nir family. As to quaternary structure, forms a complex composed of NirDL, NirG and NirH. All proteins are required for the total conversion of siroheme to didecarboxysiroheme.

It carries out the reaction siroheme + 2 H(+) = 12,18-didecarboxysiroheme + 2 CO2. The protein operates within porphyrin-containing compound metabolism. Functionally, involved in heme d1 biosynthesis. Catalyzes the decarboxylation of siroheme into didecarboxysiroheme. Siroheme is probably decarboxylated to monodecarboxysiroheme, which is in turn decarboxylated to didecarboxysiroheme. This Paracoccus pantotrophus (Thiosphaera pantotropha) protein is Siroheme decarboxylase NirG subunit.